The following is a 483-amino-acid chain: Acetyl-coenzyme A carboxylase carboxyl transferase subunit beta, chloroplastic (483 aa).

One can recognise a CoA carboxyltransferase N-terminal domain in the interval 219-483 (LWVQCENCYG…LHTFFPLNQN (265 aa)). Zn(2+) contacts are provided by C223, C226, C242, and C245. The C4-type zinc-finger motif lies at 223–245 (CENCYGLNYKKFFKSKMNLCEQC).

This sequence belongs to the AccD/PCCB family. Acetyl-CoA carboxylase is a heterohexamer composed of biotin carboxyl carrier protein, biotin carboxylase and 2 subunits each of ACCase subunit alpha and ACCase plastid-coded subunit beta (accD). Zn(2+) serves as cofactor.

The protein localises to the plastid. It is found in the chloroplast stroma. It catalyses the reaction N(6)-carboxybiotinyl-L-lysyl-[protein] + acetyl-CoA = N(6)-biotinyl-L-lysyl-[protein] + malonyl-CoA. Its pathway is lipid metabolism; malonyl-CoA biosynthesis; malonyl-CoA from acetyl-CoA: step 1/1. Its function is as follows. Component of the acetyl coenzyme A carboxylase (ACC) complex. Biotin carboxylase (BC) catalyzes the carboxylation of biotin on its carrier protein (BCCP) and then the CO(2) group is transferred by the transcarboxylase to acetyl-CoA to form malonyl-CoA. The chain is Acetyl-coenzyme A carboxylase carboxyl transferase subunit beta, chloroplastic from Guizotia abyssinica (Niger).